A 157-amino-acid chain; its full sequence is Putative low molecular weight protein-tyrosine-phosphatase slr0328 (157 aa).

Cysteine 7 (nucleophile) is an active-site residue. Arginine 13 is a catalytic residue. Aspartate 124 (proton donor) is an active-site residue.

This sequence belongs to the low molecular weight phosphotyrosine protein phosphatase family.

It carries out the reaction O-phospho-L-tyrosyl-[protein] + H2O = L-tyrosyl-[protein] + phosphate. In Synechocystis sp. (strain ATCC 27184 / PCC 6803 / Kazusa), this protein is Putative low molecular weight protein-tyrosine-phosphatase slr0328.